We begin with the raw amino-acid sequence, 391 residues long: MFPNGTASSPSSSPSPSPGSCGEGACSRGPGSGAADGMEEPGRNASQNGTLSEGQGSAILISFIYSVVCLVGLCGNSMVIYVILRYAKMKTATNIYILNLAIADELLMLSVPFLVTSTLLRHWPFGALLCRLVLSVDAVNMFTSIYCLTVLSVDRYVAVVHPIKAARYRRPTVAKVVNLGVWVLSLLVILPIVVFSRTAANSDGTVACNMLMPEPAQRWLVGFVLYTFLMGFLLPVGAICLCYVLIIAKMRMVALKAGWQQRKRSERKITLMVMMVVMVFVICWMPFYVVQLVNVFAEQDDATVSQLSVILGYANSCANPILYGFLSDNFKRSFQRILCLSWMDNAAEEPVDYYATALKSRAYSVEDFQPENLESGGVFRNGTCASRISTL.

Positions 1–50 (MFPNGTASSPSSSPSPSPGSCGEGACSRGPGSGAADGMEEPGRNASQNGT) are disordered. Over 1–56 (MFPNGTASSPSSSPSPSPGSCGEGACSRGPGSGAADGMEEPGRNASQNGTLSEGQG) the chain is Extracellular. N-linked (GlcNAc...) asparagine glycosylation occurs at asparagine 4. The segment covering 8–20 (SSPSSSPSPSPGS) has biased composition (low complexity). N-linked (GlcNAc...) asparagine glycans are attached at residues asparagine 44 and asparagine 48. A helical membrane pass occupies residues 57–84 (SAILISFIYSVVCLVGLCGNSMVIYVIL). The Cytoplasmic portion of the chain corresponds to 85–94 (RYAKMKTATN). The helical transmembrane segment at 95 to 120 (IYILNLAIADELLMLSVPFLVTSTLL) threads the bilayer. At 121–131 (RHWPFGALLCR) the chain is on the extracellular side. Cysteine 130 and cysteine 208 form a disulfide bridge. The helical transmembrane segment at 132–153 (LVLSVDAVNMFTSIYCLTVLSV) threads the bilayer. Residues 154-175 (DRYVAVVHPIKAARYRRPTVAK) are Cytoplasmic-facing. Residues 176-196 (VVNLGVWVLSLLVILPIVVFS) form a helical membrane-spanning segment. At 197-219 (RTAANSDGTVACNMLMPEPAQRW) the chain is on the extracellular side. A helical transmembrane segment spans residues 220–244 (LVGFVLYTFLMGFLLPVGAICLCYV). The Cytoplasmic portion of the chain corresponds to 245–270 (LIIAKMRMVALKAGWQQRKRSERKIT). The chain crosses the membrane as a helical span at residues 271 to 296 (LMVMMVVMVFVICWMPFYVVQLVNVF). Residues 297 to 303 (AEQDDAT) are Extracellular-facing. A helical membrane pass occupies residues 304 to 327 (VSQLSVILGYANSCANPILYGFLS). At 328 to 391 (DNFKRSFQRI…GTCASRISTL (64 aa)) the chain is on the cytoplasmic side. Cysteine 339 is lipidated: S-palmitoyl cysteine.

It belongs to the G-protein coupled receptor 1 family. Jejunum and stomach.

It localises to the cell membrane. In terms of biological role, receptor for somatostatin with higher affinity for somatostatin-14 than -28. This receptor is coupled via pertussis toxin sensitive G proteins to inhibition of adenylyl cyclase. In addition it stimulates phosphotyrosine phosphatase and Na(+)/H(+) exchanger via pertussis toxin insensitive G proteins. In Mus musculus (Mouse), this protein is Somatostatin receptor type 1 (Sstr1).